The following is a 284-amino-acid chain: Polyamine aminopropyltransferase (284 aa).

The 237-residue stretch at 6–242 folds into the PABS domain; it reads KGWFTEVCKE…GWWSATLAGH (237 aa). Gln36 provides a ligand contact to S-methyl-5'-thioadenosine. Spermidine is bound by residues His67 and Asp91. S-methyl-5'-thioadenosine contacts are provided by residues Glu111 and 142 to 143; that span reads DG. Asp161 serves as the catalytic Proton acceptor. 161-164 contributes to the spermidine binding site; sequence DSTD.

The protein belongs to the spermidine/spermine synthase family. As to quaternary structure, homodimer or homotetramer.

It localises to the cytoplasm. It catalyses the reaction S-adenosyl 3-(methylsulfanyl)propylamine + putrescine = S-methyl-5'-thioadenosine + spermidine + H(+). It participates in amine and polyamine biosynthesis; spermidine biosynthesis; spermidine from putrescine: step 1/1. Its function is as follows. Catalyzes the irreversible transfer of a propylamine group from the amino donor S-adenosylmethioninamine (decarboxy-AdoMet) to putrescine (1,4-diaminobutane) to yield spermidine. In Nitrosococcus oceani (strain ATCC 19707 / BCRC 17464 / JCM 30415 / NCIMB 11848 / C-107), this protein is Polyamine aminopropyltransferase.